The following is a 188-amino-acid chain: Adenine phosphoribosyltransferase (188 aa).

The protein belongs to the purine/pyrimidine phosphoribosyltransferase family. Homodimer.

It localises to the cytoplasm. The enzyme catalyses AMP + diphosphate = 5-phospho-alpha-D-ribose 1-diphosphate + adenine. The protein operates within purine metabolism; AMP biosynthesis via salvage pathway; AMP from adenine: step 1/1. In terms of biological role, catalyzes a salvage reaction resulting in the formation of AMP, that is energically less costly than de novo synthesis. The sequence is that of Adenine phosphoribosyltransferase from Frankia casuarinae (strain DSM 45818 / CECT 9043 / HFP020203 / CcI3).